The following is a 207-amino-acid chain: Superoxide dismutase [Fe] (207 aa).

4 residues coordinate Fe cation: His-28, His-76, Asp-160, and His-164.

This sequence belongs to the iron/manganese superoxide dismutase family. In terms of assembly, homotetramer. It depends on Fe cation as a cofactor.

It is found in the secreted. The enzyme catalyses 2 superoxide + 2 H(+) = H2O2 + O2. Its function is as follows. Destroys superoxide anion radicals which are normally produced within the cells and which are toxic to biological systems. This is Superoxide dismutase [Fe] (sodB) from Mycobacterium tuberculosis (strain CDC 1551 / Oshkosh).